We begin with the raw amino-acid sequence, 341 residues long: 4-hydroxy-2-oxovalerate aldolase 3 (341 aa).

One can recognise a Pyruvate carboxyltransferase domain in the interval 5–257; sequence ITLHDMTLRD…ETGVDVYRIA (253 aa). 13-14 provides a ligand contact to substrate; that stretch reads RD. Asp-14 provides a ligand contact to Mn(2+). The Proton acceptor role is filled by His-17. Residues Ser-167 and His-196 each contribute to the substrate site. Residues His-196 and His-198 each coordinate Mn(2+). Tyr-287 lines the substrate pocket.

The protein belongs to the 4-hydroxy-2-oxovalerate aldolase family.

The enzyme catalyses (S)-4-hydroxy-2-oxopentanoate = acetaldehyde + pyruvate. This Cupriavidus necator (strain ATCC 17699 / DSM 428 / KCTC 22496 / NCIMB 10442 / H16 / Stanier 337) (Ralstonia eutropha) protein is 4-hydroxy-2-oxovalerate aldolase 3 (bpHI).